Here is a 215-residue protein sequence, read N- to C-terminus: Protein-L-isoaspartate O-methyltransferase 1 (215 aa).

Residue S61 is part of the active site.

Belongs to the methyltransferase superfamily. L-isoaspartyl/D-aspartyl protein methyltransferase family.

The protein resides in the cytoplasm. The enzyme catalyses [protein]-L-isoaspartate + S-adenosyl-L-methionine = [protein]-L-isoaspartate alpha-methyl ester + S-adenosyl-L-homocysteine. Functionally, catalyzes the methyl esterification of L-isoaspartyl residues in peptides and proteins that result from spontaneous decomposition of normal L-aspartyl and L-asparaginyl residues. It plays a role in the repair and/or degradation of damaged proteins. This is Protein-L-isoaspartate O-methyltransferase 1 from Pelobacter propionicus (strain DSM 2379 / NBRC 103807 / OttBd1).